The sequence spans 342 residues: Protein-glutamate methylesterase/protein-glutamine glutaminase 4 (342 aa).

The Response regulatory domain maps to 2–119 (NIGIVNDLPL…GGSADPSQPL (118 aa)). Aspartate 53 is subject to 4-aspartylphosphate. Residues 144–337 (PAPQGALPPL…DQLISLVQRN (194 aa)) enclose the CheB-type methylesterase domain. Residues serine 159, histidine 186, and aspartate 279 contribute to the active site.

It belongs to the CheB family. Post-translationally, phosphorylated by CheA. Phosphorylation of the N-terminal regulatory domain activates the methylesterase activity.

It localises to the cytoplasm. The catalysed reaction is [protein]-L-glutamate 5-O-methyl ester + H2O = L-glutamyl-[protein] + methanol + H(+). It carries out the reaction L-glutaminyl-[protein] + H2O = L-glutamyl-[protein] + NH4(+). In terms of biological role, involved in chemotaxis. Part of a chemotaxis signal transduction system that modulates chemotaxis in response to various stimuli. Catalyzes the demethylation of specific methylglutamate residues introduced into the chemoreceptors (methyl-accepting chemotaxis proteins or MCP) by CheR. Also mediates the irreversible deamidation of specific glutamine residues to glutamic acid. The polypeptide is Protein-glutamate methylesterase/protein-glutamine glutaminase 4 (Burkholderia thailandensis (strain ATCC 700388 / DSM 13276 / CCUG 48851 / CIP 106301 / E264)).